Here is a 236-residue protein sequence, read N- to C-terminus: Purine nucleoside phosphorylase CA_C1699 (236 aa).

Zn(2+)-binding residues include His-62, Cys-97, and His-114.

It belongs to the purine nucleoside phosphorylase YfiH/LACC1 family. In terms of assembly, homodimer. It depends on Cu(2+) as a cofactor. The cofactor is Zn(2+).

It carries out the reaction adenosine + phosphate = alpha-D-ribose 1-phosphate + adenine. The catalysed reaction is S-methyl-5'-thioadenosine + phosphate = 5-(methylsulfanyl)-alpha-D-ribose 1-phosphate + adenine. The enzyme catalyses inosine + phosphate = alpha-D-ribose 1-phosphate + hypoxanthine. It catalyses the reaction adenosine + H2O + H(+) = inosine + NH4(+). Functionally, purine nucleoside enzyme that catalyzes the phosphorolysis of adenosine and inosine nucleosides, yielding D-ribose 1-phosphate and the respective free bases, adenine and hypoxanthine. Also catalyzes the phosphorolysis of S-methyl-5'-thioadenosine into adenine and S-methyl-5-thio-alpha-D-ribose 1-phosphate. Also has adenosine deaminase activity. The chain is Purine nucleoside phosphorylase CA_C1699 from Clostridium acetobutylicum (strain ATCC 824 / DSM 792 / JCM 1419 / IAM 19013 / LMG 5710 / NBRC 13948 / NRRL B-527 / VKM B-1787 / 2291 / W).